The primary structure comprises 325 residues: Ribosomal RNA small subunit methyltransferase H (325 aa).

Residues 39–41 (GGH), D59, F90, D108, and Q115 contribute to the S-adenosyl-L-methionine site.

It belongs to the methyltransferase superfamily. RsmH family.

Its subcellular location is the cytoplasm. The enzyme catalyses cytidine(1402) in 16S rRNA + S-adenosyl-L-methionine = N(4)-methylcytidine(1402) in 16S rRNA + S-adenosyl-L-homocysteine + H(+). In terms of biological role, specifically methylates the N4 position of cytidine in position 1402 (C1402) of 16S rRNA. This is Ribosomal RNA small subunit methyltransferase H from Leptothrix cholodnii (strain ATCC 51168 / LMG 8142 / SP-6) (Leptothrix discophora (strain SP-6)).